Here is an 85-residue protein sequence, read N- to C-terminus: Major outer membrane protein 1 (85 aa).

The first 18 residues, 1 to 18 (MEAREVEEMRRSRLLTLG), serve as a signal peptide directing secretion. A helical transmembrane segment spans residues 22-42 (YTAVIALAALVLVMGALGLVL).

In terms of assembly, forms extremely stable complexes with apparent masses of 150, 50, 45 and 38 kDa. Found in a ring-shaped complex of 7 nm diameter with a 2 nm channel through the middle. Complete denaturation requires temperatures over 110 degrees Celsius.

It localises to the cell outer membrane. Its function is as follows. The most abundant protein of the outer membrane, it forms a pore through it. The chain is Major outer membrane protein 1 (ihomp1) from Ignicoccus hospitalis (strain KIN4/I / DSM 18386 / JCM 14125).